Reading from the N-terminus, the 228-residue chain is MKYLNQQEAISIDEELFNEYKFSVDQLMELAGLSCAHVIADAYAPESNKILICCGPGNNGGDGLVAARHLALMNYNPYVYYPKRTEKELFRNLQHQAESMGITVTTDCPDGASVEQEFGLIVDALFGFSFKPPVRDSFLPIMNVLQRSKLPIVSIDIPSGWNVEEGPQNECDIQPACLISLTAPKLCAKRLLNAQHYLGGRFVPKRLEEKYSLELPSYLGSNLFVKLN.

The YjeF N-terminal domain maps to 9-215; that stretch reads AISIDEELFN…RLEEKYSLEL (207 aa). 58–62 is a binding site for (6S)-NADPHX; it reads NNGGD. K(+) is bound by residues Asn-59 and Asp-123. Residues 127–133 and Asp-156 each bind (6S)-NADPHX; that span reads GFSFKPP. Ser-159 provides a ligand contact to K(+).

Belongs to the NnrE/AIBP family. K(+) serves as cofactor.

It carries out the reaction (6R)-NADHX = (6S)-NADHX. The catalysed reaction is (6R)-NADPHX = (6S)-NADPHX. Functionally, catalyzes the epimerization of the S- and R-forms of NAD(P)HX, a damaged form of NAD(P)H that is a result of enzymatic or heat-dependent hydration. This is a prerequisite for the S-specific NAD(P)H-hydrate dehydratase to allow the repair of both epimers of NAD(P)HX. The sequence is that of NAD(P)H-hydrate epimerase from Anopheles darlingi (Mosquito).